An 859-amino-acid chain; its full sequence is Probable helicase A859L (859 aa).

Residues 178-349 enclose the Helicase ATP-binding domain; the sequence is YQELQRSGRA…KNRELFGGVA (172 aa). 191–198 is an ATP binding site; the sequence is MACRCGKT. The DEAH box motif lies at 298–301; the sequence is DECH. Residues 394–553 enclose the Helicase C-terminal domain; that stretch reads QIIMALAYLK…RFYEHLLNPS (160 aa).

The protein belongs to the asfivirus helicase A859L family.

The chain is Probable helicase A859L from African swine fever virus (isolate Pig/Kenya/KEN-50/1950) (ASFV).